We begin with the raw amino-acid sequence, 161 residues long: Type II secretion system protein M (161 aa).

Residues 1–16 are Cytoplasmic-facing; that stretch reads MNELRRRWQVMSQRER. Residues 17 to 37 traverse the membrane as a helical segment; the sequence is LMALACGGLVVLCLLYYLIWA. The Periplasmic portion of the chain corresponds to 38-161; the sequence is PWQESVRQWQ…VTRLSLERVL (124 aa).

It belongs to the GSP M family. Type II secretion system is composed of four main components: the outer membrane complex, the inner membrane complex, the cytoplasmic secretion ATPase and the periplasm-spanning pseudopilus. Forms homodimers. Interacts with OutL/GspL. Interacts with OutE/GspE and OutF/GspF.

It is found in the cell inner membrane. In terms of biological role, inner membrane component of the type II secretion system required for the energy-dependent secretion of extracellular factors such as proteases and toxins from the periplasm. Plays a role in the complex assembly and recruits OutL resulting in a stable complex in the inner membrane. Provides thus a link between the energy-providing OutE protein in the cytoplasm and the rest of the T2SS machinery. This is Type II secretion system protein M (outM) from Dickeya chrysanthemi (Pectobacterium chrysanthemi).